Consider the following 482-residue polypeptide: UDP-glycosyltransferase 1 (482 aa).

An N-linked (GlcNAc...) asparagine glycan is attached at Asn243. The helical transmembrane segment at 450–470 threads the bilayer; it reads IYLVYALVLGSAWWIGKTILG.

The protein belongs to the glycosyltransferase 28 family.

It is found in the membrane. It catalyses the reaction exophillate aglycone + UDP-alpha-D-glucose = exophillate + UDP + H(+). The protein operates within secondary metabolite biosynthesis. Functionally, acts as a depside 2-O-glucosyltransferase that catalyzes the first glycosylation step during phaeomoniecin D biosynthesis by producing the intermediate exophillic acid which is further O-galactosylated into phaeomoniecin D by the C-galactosyltransferase OGT2. This Phaeomoniella chlamydospora (Phaeoacremonium chlamydosporum) protein is UDP-glycosyltransferase 1.